The following is a 765-amino-acid chain: Probable exo-1,4-beta-xylosidase bxlB (765 aa).

Residues 1 to 25 (MYSSNSRRAASILACIVSLTQLGFA) form the signal peptide. N-linked (GlcNAc...) asparagine glycans are attached at residues asparagine 67 and asparagine 107. Aspartate 293 is an active-site residue. N-linked (GlcNAc...) asparagine glycosylation is found at asparagine 345, asparagine 412, asparagine 423, asparagine 464, and asparagine 761.

This sequence belongs to the glycosyl hydrolase 3 family.

Its subcellular location is the secreted. The enzyme catalyses Hydrolysis of (1-&gt;4)-beta-D-xylans, to remove successive D-xylose residues from the non-reducing termini.. Its pathway is glycan degradation; xylan degradation. Functionally, xylan 1,4-beta-xylosidase involved in the hydrolysis of xylan, a major structural heterogeneous polysaccharide found in plant biomass representing the second most abundant polysaccharide in the biosphere, after cellulose. The sequence is that of Probable exo-1,4-beta-xylosidase bxlB (bxlB) from Aspergillus terreus (strain NIH 2624 / FGSC A1156).